Reading from the N-terminus, the 635-residue chain is MNDNIARKMQQTYNITYWGGGYYCANNRGNISVCPNPDVPEATLDLTELVKQVQEEHSHLRLPALFCFPQILQHRLRSINAAFHRARESYGYKGDYFLVYPIKVNQQRRVIESLINAGEPLGLEAGSKAELMAVLAHANMTSSVIVCNGYKDREYIRLALTGEKLGHKVFLVIEKMSEIKMVLEEAERLEVIPRLGVRARLASQGSGKWQASGGEKSKFGLAATQVLQLIDTLRQAGRLDSLQLLHFHLGSQMANIRDIATGVRESARFYVELHKLGVNIQYFDVGGGLGVDYEGTRSQSDCSVNYGLNEYANNVIWAIGDACDENELPHPTVITESGRALTAHHTVLISNVIGVERNEFTAITPPAEDAPRPIASLWETWEEMQTKGNSRSLREWLHDSQLDLHDVHTQYVHGMLSLTERAWAEELYLNICRHIQYDLDPSNRAHRPIIDELQERMSDKFYVNFSLFQSLPDAWGIDQLFPVLPIEGLDKPLDRRAVLLDITCDSDGIIDHYVDGDGVETTMPMPAYDPEYPPMIGFFMVGAYQEILGNMHNLFGDTAAVDVYLDEKGNLTYQLSEEGDTVADMLQYVKLNPAVLLERFRTQVKNAQLDKALQEQFLTEFESGLYGYTYLEEEE.

K103 bears the N6-(pyridoxal phosphate)lysine mark. Position 283 to 293 (283 to 293 (FDVGGGLGVDY)) interacts with substrate.

It belongs to the Orn/Lys/Arg decarboxylase class-II family. SpeA subfamily. It depends on Mg(2+) as a cofactor. The cofactor is pyridoxal 5'-phosphate.

The enzyme catalyses L-arginine + H(+) = agmatine + CO2. The protein operates within amine and polyamine biosynthesis; agmatine biosynthesis; agmatine from L-arginine: step 1/1. Its function is as follows. Catalyzes the biosynthesis of agmatine from arginine. This chain is Biosynthetic arginine decarboxylase, found in Proteus mirabilis (strain HI4320).